We begin with the raw amino-acid sequence, 152 residues long: uncharacterized protein (152 aa).

The N-terminal stretch at 1-23 (MYSILIACLVLLLCLVIYVGHRA) is a signal peptide.

This sequence belongs to the asfivirus EP152R family.

It is found in the virion. This is an uncharacterized protein from Ornithodoros (relapsing fever ticks).